Consider the following 244-residue polypeptide: Transcription factor A, mitochondrial (244 aa).

A mitochondrion-targeting transit peptide spans 1–42 (MALFRGMWGVLRTLGRTGVEMCAGCGGRIPSPVSLICIPKCF). The segment at residues 49–117 (PKKPMSSYLR…VYKEAVSKYK (69 aa)) is a DNA-binding region (HMG box 1). Residues Ser54, Ser55, and Ser60 each carry the phosphoserine; by PKA modification. Lys66 bears the N6-succinyllysine mark. Position 121 is a phosphothreonine (Thr121). The HMG box 2 DNA-binding region spans 154-218 (PKRPRSAYNI…RYDNEMKSWE (65 aa)). At Ser159 the chain carries Phosphoserine; by PKA. Position 192 is a phosphoserine (Ser192). The interval 221–244 (MAEVGRSDLIRRSVKRPPGDISEN) is disordered.

As to quaternary structure, monomer; binds DNA as a monomer. Homodimer. Component of the mitochondrial transcription initiation complex, composed at least of TFB2M, TFAM and POLRMT. In this complex TFAM recruits POLRMT to the promoter whereas TFB2M induces structural changes in POLRMT to enable promoter opening and trapping of the DNA non-template strand. Upon metabolic stress, forms a complex composed of FOXO3, SIRT3, TFAM and POLRMT. Interacts with TFB1M and TFB2M. Interacts with CLPX; this enhances DNA-binding. In terms of processing, phosphorylation by PKA within the HMG box 1 impairs DNA binding and promotes degradation by the AAA+ Lon protease. As to expression, the mitochondrial isoform is widely expressed while the nuclear isoform is testis-specific.

The protein localises to the mitochondrion. Its subcellular location is the mitochondrion matrix. The protein resides in the mitochondrion nucleoid. It is found in the nucleus. In terms of biological role, binds to the mitochondrial light strand promoter and functions in mitochondrial transcription regulation. Component of the mitochondrial transcription initiation complex, composed at least of TFB2M, TFAM and POLRMT that is required for basal transcription of mitochondrial DNA. In this complex, TFAM recruits POLRMT to a specific promoter whereas TFB2M induces structural changes in POLRMT to enable promoter opening and trapping of the DNA non-template strand. Required for accurate and efficient promoter recognition by the mitochondrial RNA polymerase. Promotes transcription initiation from the HSP1 and the light strand promoter by binding immediately upstream of transcriptional start sites. Is able to unwind DNA. Bends the mitochondrial light strand promoter DNA into a U-turn shape via its HMG boxes. Required for maintenance of normal levels of mitochondrial DNA. May play a role in organizing and compacting mitochondrial DNA. Functionally, may also function as a transcriptional activator or may have a structural role in the compaction of nuclear DNA during spermatogenesis. This Rattus norvegicus (Rat) protein is Transcription factor A, mitochondrial.